The chain runs to 418 residues: AP-3 complex subunit mu-1 (418 aa).

The region spanning 176-417 (NNEAYFDVVE…VTKAGKFQVR (242 aa)) is the MHD domain.

The protein belongs to the adaptor complexes medium subunit family. Adaptor protein complex 3 (AP-3) is a heterotetramer composed of two large adaptins (delta-type subunit AP3D1 and beta-type subunit AP3B1 or AP3B2), a medium adaptin (mu-type subunit AP3M1 or AP3M2) and a small adaptin (sigma-type subunit APS1 or AP3S2). Interacts with AGAP1. AP-3 associates with the BLOC-1 complex.

The protein resides in the golgi apparatus. It localises to the cytoplasmic vesicle membrane. Part of the AP-3 complex, an adaptor-related complex which is not clathrin-associated. The complex is associated with the Golgi region as well as more peripheral structures. It facilitates the budding of vesicles from the Golgi membrane and may be directly involved in trafficking to lysosomes. In concert with the BLOC-1 complex, AP-3 is required to target cargos into vesicles assembled at cell bodies for delivery into neurites and nerve terminals. The protein is AP-3 complex subunit mu-1 (AP3M1) of Bos taurus (Bovine).